The primary structure comprises 716 residues: MALTAALKAQIAAWYKALQEQIPDFIPRAPQRQMIADVAKTLAGEEGRHLAIEAPTGVGKTLSYLIPGIAIAREEQKTLVVSTANVALQDQIYSKDLPLLKKIIPDLKFTAAFGRGRYVCPRNLTALASTEPTQQDLLAFLDDELTPNNQEEQKRCAKLKGDLDTYKWDGLRDHTDIAIDDDLWRRLSTDKASCLNRNCYYYRECPFFVTRREIQEAEVVVANHALVMAAMESEAVLPDPKNLLLVLDEGHHLPDVARDALEMSAEITVPWYRLQLDLFTKLVATCMEQFRPKTIPPLAIPERLNAHCEELYELIASLNNILNLYMPAGQEAEHRFAMGELPDELLEICQRLAKLTEMLRGLAELFLNDLSEKTGSHDIVRLHRLILQMNRALGMFEVQSKLWRLASLAQSSGAPVTKWATREEREGQLHLWFHCVGIRVSDQLERLLWRSIPHIIVTSATLRSLNSFSRLQEMSGLKEKAGDRFVALDSPFNHCEQGKIVIPRMRFEPSIDNEEQHIAEMAAFFREQVESKKYLGMLVLFASGRAMQRFLDYVTDLRLMLLVQGDQPRYRLVELHRKRVANGERSVLVGLQSFAEGLDLKGDLLSQVHIHKIAFPPIDSPVVITEGEWLKSLNRYPFEVQSLPSASFNLIQQVGRLIRSHGCWGEVVIYDKRLLTKNYGKRLLDALPVFPIEQPEVPEGIVKKKEKTKSPRRRRR.

The Helicase ATP-binding domain maps to alanine 17–threonine 294. ATP is bound at residue alanine 54–threonine 61. Cysteine 120 serves as a coordination point for [4Fe-4S] cluster. Positions glutamate 131 to glutamine 134 match the DEAH box motif. [4Fe-4S] cluster contacts are provided by cysteine 194, cysteine 199, and cysteine 205. A DEAH box motif is present at residues aspartate 248–histidine 251. The Helicase C-terminal domain occupies alanine 487–proline 698.

This sequence belongs to the helicase family. DinG subfamily. Type 1 sub-subfamily. Requires [4Fe-4S] cluster as cofactor.

The enzyme catalyses Couples ATP hydrolysis with the unwinding of duplex DNA at the replication fork by translocating in the 5'-3' direction. This creates two antiparallel DNA single strands (ssDNA). The leading ssDNA polymer is the template for DNA polymerase III holoenzyme which synthesizes a continuous strand.. The catalysed reaction is ATP + H2O = ADP + phosphate + H(+). Its function is as follows. DNA-dependent ATPase and 5'-3' DNA helicase. Unwinds D-loops, R-loops, forked DNA and G-quadruplex DNA. The polypeptide is ATP-dependent DNA helicase DinG (Shigella flexneri).